The sequence spans 991 residues: Collagenase ColT (991 aa).

Positions 1 to 28 are cleaved as a signal peptide; that stretch reads MKKKFIKMLCSIAIGCMISTSYSIKVSA. Residues 29–52 constitute a propeptide that is removed on maturation; the sequence is FSNGNTKTNPNGEFKSLSLNSTNP. Residues 53 to 727 form an S1 metalloprotease domain, degrades FALGPA (furylacryloyl-Leu-Gly-Pro-Ala) region; that stretch reads YKTKYSFNDL…VYDIVFHGLL (675 aa). Residues 57–330 form an activator domain region; the sequence is YSFNDLNKLS…AIEAIKEDFN (274 aa). The interval 340-611 is catalytic subdomain; sequence DINKLIEEGK…MENLVNNYDN (272 aa). Glutamate 440 is a Ca(2+) binding site. Histidine 465 contributes to the Zn(2+) binding site. Glutamate 466 is a catalytic residue. Histidine 469 contributes to the Zn(2+) binding site. Ca(2+) is bound by residues glycine 473, isoleucine 477, and glycine 479. Glutamate 499 lines the Zn(2+) pocket. A helper subdomain region spans residues 619-731; that stretch reads DDYMKQYDNK…VFHGLLSHNK (113 aa). 2 collagen-binding domain regions span residues 755–870 and 878–991; these read IYEK…NISD and IKKI…VIIN. Glutamate 757, glutamate 759, asparagine 761, aspartate 784, aspartate 787, glutamate 883, glutamate 885, asparagine 887, aspartate 888, aspartate 910, and aspartate 913 together coordinate Ca(2+).

This sequence belongs to the peptidase M9B family. Collagenase subfamily. Requires Ca(2+) as cofactor. It depends on Zn(2+) as a cofactor.

It is found in the secreted. The enzyme catalyses Digestion of native collagen in the triple helical region at Xaa-|-Gly bonds. With synthetic peptides, a preference is shown for Gly at P3 and P1', Pro and Ala at P2 and P2', and hydroxyproline, Ala or Arg at P3'.. Its activity is regulated as follows. Partially inhibited by 1-10-phenanthroline; inactivation is irreversible. Partially inhibited by EDTA; inactivation is reversible. Inhibited by broad-spectrum zinc metalloprotease inhibitor batimastat. N-aryl mercaptoacetamide-based inhibitors have been isolated that act on clostridial collagenases with submicromolar affinity while having negligibile activity on human collagenases. Its function is as follows. Clostridial collagenases are among the most efficient degraders of eukaryotic collagen known; saprophytes use collagen as a carbon source while pathogens additionally digest collagen to aid in host colonization. Has both tripeptidylcarboxypeptidase on Gly-X-Y and endopeptidase activities; the endopeptidase cuts within the triple helix region of collagen while tripeptidylcarboxypeptidase successively digests the exposed ends, thus clostridial collagenases can digest large sections of collagen. The activator domain (residues 57-330) and catalytic subdomain (340-611) open and close around substrate allowing digestion when the protein is closed. This is Collagenase ColT from Clostridium tetani (strain Massachusetts / E88).